A 213-amino-acid polypeptide reads, in one-letter code: Adenylate kinase (213 aa).

Residue 10–15 (GAGKGT) coordinates ATP. The segment at 30-59 (STGDIFRANIKNNTELGQKAKTYMDKGELV) is NMP. AMP is bound by residues Thr-31, Arg-36, 57-59 (ELV), 85-88 (GFPR), and Gln-92. The segment at 126-163 (GRRACVGCGATYHIQFNPTKVEGICDACGEKLILRDDD) is LID. Arg-127 lines the ATP pocket. The Zn(2+) site is built by Cys-130 and Cys-133. ATP is bound at residue 136–137 (TY). Zn(2+) is bound by residues Cys-150 and Cys-153. The AMP site is built by Arg-160 and Arg-171. Gln-199 is a binding site for ATP.

The protein belongs to the adenylate kinase family. Monomer.

Its subcellular location is the cytoplasm. The catalysed reaction is AMP + ATP = 2 ADP. The protein operates within purine metabolism; AMP biosynthesis via salvage pathway; AMP from ADP: step 1/1. Its function is as follows. Catalyzes the reversible transfer of the terminal phosphate group between ATP and AMP. Plays an important role in cellular energy homeostasis and in adenine nucleotide metabolism. This is Adenylate kinase from Lachnospira eligens (strain ATCC 27750 / DSM 3376 / VPI C15-48 / C15-B4) (Eubacterium eligens).